The primary structure comprises 60 residues: Homeobox protein engrailed-like (60 aa).

Positions 1-41 (GEQLCRLRAEFQASRYLTEERRTALARELRLNEAQIKIWFQ) form a DNA-binding region, homeobox.

The protein belongs to the engrailed homeobox family.

The protein resides in the nucleus. The sequence is that of Homeobox protein engrailed-like from Lampetra planeri (Brook lamprey).